The following is an 89-amino-acid chain: MALTTENKAAIVADYAQSKGDTGSPEVQVALLTARINDLTPHFKEHSKDHHSRRGLLHLVSQRRKLLDYLKGKNVERYRTLITRLGLRK.

The protein belongs to the universal ribosomal protein uS15 family. As to quaternary structure, part of the 30S ribosomal subunit. Forms a bridge to the 50S subunit in the 70S ribosome, contacting the 23S rRNA.

Functionally, one of the primary rRNA binding proteins, it binds directly to 16S rRNA where it helps nucleate assembly of the platform of the 30S subunit by binding and bridging several RNA helices of the 16S rRNA. Forms an intersubunit bridge (bridge B4) with the 23S rRNA of the 50S subunit in the ribosome. The polypeptide is Small ribosomal subunit protein uS15 (Dechloromonas aromatica (strain RCB)).